The chain runs to 79 residues: Putative membrane protein insertion efficiency factor (79 aa).

It belongs to the UPF0161 family.

It is found in the cell inner membrane. In terms of biological role, could be involved in insertion of integral membrane proteins into the membrane. This Cytophaga hutchinsonii (strain ATCC 33406 / DSM 1761 / CIP 103989 / NBRC 15051 / NCIMB 9469 / D465) protein is Putative membrane protein insertion efficiency factor.